A 32-amino-acid polypeptide reads, in one-letter code: Photosystem II reaction center protein Psb30 (32 aa).

The chain crosses the membrane as a helical span at residues 3–23 (IVIVQLGSLALITLAGPIIIV).

This sequence belongs to the Psb30/Ycf12 family. In terms of assembly, PSII is composed of 1 copy each of membrane proteins PsbA, PsbB, PsbC, PsbD, PsbE, PsbF, PsbH, PsbI, PsbJ, PsbK, PsbL, PsbM, PsbT, PsbY, PsbZ, Psb30/Ycf12, peripheral proteins of the oxygen-evolving complex and a large number of cofactors. It forms dimeric complexes.

The protein resides in the plastid. It is found in the chloroplast thylakoid membrane. Functionally, a core subunit of photosystem II (PSII), probably helps stabilize the reaction center. The protein is Photosystem II reaction center protein Psb30 of Euglena viridis (Cercaria viridis).